Here is a 200-residue protein sequence, read N- to C-terminus: dITP/XTP pyrophosphatase (200 aa).

8–13 lines the substrate pocket; sequence TGNQGK. Aspartate 69 functions as the Proton acceptor in the catalytic mechanism. Aspartate 69 contacts Mg(2+). Substrate-binding positions include serine 70, 154 to 157, lysine 177, and 182 to 183; these read FGYD and HR.

It belongs to the HAM1 NTPase family. Homodimer. It depends on Mg(2+) as a cofactor.

It catalyses the reaction XTP + H2O = XMP + diphosphate + H(+). It carries out the reaction dITP + H2O = dIMP + diphosphate + H(+). The enzyme catalyses ITP + H2O = IMP + diphosphate + H(+). Its function is as follows. Pyrophosphatase that catalyzes the hydrolysis of nucleoside triphosphates to their monophosphate derivatives, with a high preference for the non-canonical purine nucleotides XTP (xanthosine triphosphate), dITP (deoxyinosine triphosphate) and ITP. Seems to function as a house-cleaning enzyme that removes non-canonical purine nucleotides from the nucleotide pool, thus preventing their incorporation into DNA/RNA and avoiding chromosomal lesions. The polypeptide is dITP/XTP pyrophosphatase (Vibrio parahaemolyticus serotype O3:K6 (strain RIMD 2210633)).